Consider the following 337-residue polypeptide: G-protein coupled receptor 26 (337 aa).

At 1-10 (MNSWDAGLAG) the chain is on the extracellular side. Residues 11–31 (LLVGTIGVSLLSNGLVLLCLL) form a helical membrane-spanning segment. Residues 32 to 47 (HSADIRRQAPALFTLN) lie on the Cytoplasmic side of the membrane. Residues 48–68 (LTCGNLLCTVVNMPLTLAGVV) form a helical membrane-spanning segment. The Extracellular portion of the chain corresponds to 69 to 81 (AQRQPAGDRLCRL). Cysteines 79 and 156 form a disulfide. Residues 82-102 (AAFLDTFLAANSMLSMAALSI) form a helical membrane-spanning segment. The Cytoplasmic segment spans residues 103–123 (DRWVAVVFPLSYRAKMRLRDA). Residues 124–144 (AFMVAYTWLHALTFPATALAL) traverse the membrane as a helical segment. The Extracellular portion of the chain corresponds to 145–168 (SWLGFHQLYASCTLCSRRPDERLR). A helical membrane pass occupies residues 169–189 (FAVFTSAFHALSFLLSFIVLC). Topologically, residues 190-245 (FTYLKVLKVARFHCKRIDVITMQTLVLLVDIHPSVRERCLEEQKRRRQRATKKIST) are cytoplasmic. The helical transmembrane segment at 246 to 266 (FIGTFLVCFAPYVITRLVELF) threads the bilayer. At 267–276 (STAPIGSHWG) the chain is on the extracellular side. The helical transmembrane segment at 277 to 297 (VLSKCLAYSKAASDPFVYSLL) threads the bilayer. Residues 298 to 337 (RHQYRRSCKELLNRIFNRRSLHSVGLTGDSHSQNILPVSE) are Cytoplasmic-facing.

It belongs to the G-protein coupled receptor 1 family. In terms of tissue distribution, exclusively expressed in the brain. Prominent expression is detected throughout the entire neocortex at all rostrocaudal and dorsoventral levels. Strong expression is detected in olfactory and auditory sensory areas.

It localises to the cell membrane. In terms of biological role, orphan receptor. Displays a significant level of constitutive activity. Its effect is mediated by G(s)-alpha protein that stimulate adenylate cyclase, resulting in an elevation of intracellular cAMP. In Mus musculus (Mouse), this protein is G-protein coupled receptor 26 (Gpr26).